The sequence spans 123 residues: Large ribosomal subunit protein bL12 (123 aa).

The protein belongs to the bacterial ribosomal protein bL12 family. In terms of assembly, homodimer. Part of the ribosomal stalk of the 50S ribosomal subunit. Forms a multimeric L10(L12)X complex, where L10 forms an elongated spine to which 2 to 4 L12 dimers bind in a sequential fashion. Binds GTP-bound translation factors.

Its function is as follows. Forms part of the ribosomal stalk which helps the ribosome interact with GTP-bound translation factors. Is thus essential for accurate translation. This Salmonella arizonae (strain ATCC BAA-731 / CDC346-86 / RSK2980) protein is Large ribosomal subunit protein bL12.